The following is a 348-amino-acid chain: NADH-quinone oxidoreductase subunit H (348 aa).

The next 8 helical transmembrane spans lie at 21-41 (IIGI…IIYA), 87-107 (GLFL…WAVI), 120-140 (IGLL…IIAG), 166-186 (IGFV…SAIV), 193-213 (IFGF…AVVF), 258-278 (NVIL…LPPV), 283-303 (LYMV…FFVF), and 323-343 (WKVF…WLML).

It belongs to the complex I subunit 1 family. As to quaternary structure, NDH-1 is composed of 14 different subunits. Subunits NuoA, H, J, K, L, M, N constitute the membrane sector of the complex.

It localises to the cell inner membrane. It catalyses the reaction a quinone + NADH + 5 H(+)(in) = a quinol + NAD(+) + 4 H(+)(out). NDH-1 shuttles electrons from NADH, via FMN and iron-sulfur (Fe-S) centers, to quinones in the respiratory chain. The immediate electron acceptor for the enzyme in this species is believed to be ubiquinone. Couples the redox reaction to proton translocation (for every two electrons transferred, four hydrogen ions are translocated across the cytoplasmic membrane), and thus conserves the redox energy in a proton gradient. This subunit may bind ubiquinone. This Rhizorhabdus wittichii (strain DSM 6014 / CCUG 31198 / JCM 15750 / NBRC 105917 / EY 4224 / RW1) (Sphingomonas wittichii) protein is NADH-quinone oxidoreductase subunit H.